Here is a 529-residue protein sequence, read N- to C-terminus: uncharacterized protein (529 aa).

The disordered stretch occupies residues 1 to 20; the sequence is MGADLKQPQDADSPPKGVSR. Residues 1 to 52 constitute a signal peptide (tat-type signal); sequence MGADLKQPQDADSPPKGVSRRRFLTTGAAAVVGTGVGAGGTALLSSHPRGPA.

Predicted to be exported by the Tat system. The position of the signal peptide cleavage has not been experimentally proven.

This is an uncharacterized protein from Mycobacterium tuberculosis (strain CDC 1551 / Oshkosh).